Consider the following 828-residue polypeptide: Protein kintoun (828 aa).

Disordered regions lie at residues 1–31, 223–250, 383–424, 556–668, and 741–828; these read MSGSTASARNKHSKGNLKHNNNKNKNNDEPI, KNPTDEELEPHPLEHSFPTKPTAGEGEP, DSGV…PTSN, APVQ…HRGI, and KKNQ…EDLI. Over residues 9–22 the composition is skewed to basic residues; sequence RNKHSKGNLKHNNN. Position 384 is a phosphoserine (serine 384). Residues 395 to 414 show a composition bias toward acidic residues; the sequence is PVEEEEDGEDEIEAEEEEEE. Residues 556–573 show a composition bias toward basic and acidic residues; it reads APVQEDKPGDIQFKRNDQ. The span at 591 to 601 shows a compositional bias: acidic residues; it reads EREEGEIEEAE. Over residues 606-620 the composition is skewed to basic residues; the sequence is KKSASKKQRGKRNKK. The segment covering 625-641 has biased composition (polar residues); the sequence is SESACVSLPTSVDSQPM. Over residues 741-755 the composition is skewed to basic residues; sequence KKNQKRRDCKLRAQQ. Residue serine 759 is modified to Phosphoserine. The span at 788 to 808 shows a compositional bias: basic and acidic residues; the sequence is DSGLDLTRHNKKRELAEEADN. Positions 815-828 are enriched in acidic residues; that stretch reads EMDDDDDDEDEDLI.

Belongs to the PIH1 family. Kintoun subfamily. As to quaternary structure, interacts with Pp1alpha-96A, Pp1-87B, Pp1-13C and flw.

The protein resides in the cytoplasm. Required for cytoplasmic pre-assembly of axonemal dyneins, thereby playing a central role in motility in cilia and flagella. Involved in pre-assembly of dynein arm complexes in the cytoplasm before intraflagellar transport loads them for the ciliary compartment. This chain is Protein kintoun, found in Drosophila willistoni (Fruit fly).